A 141-amino-acid chain; its full sequence is Arsenate reductase (141 aa).

C12 acts as the Nucleophile; cysteine thioarsenate intermediate in catalysis.

It belongs to the ArsC family.

The catalysed reaction is [glutaredoxin]-dithiol + arsenate + glutathione + H(+) = glutathionyl-S-S-[glutaredoxin] + arsenite + H2O. Involved in resistance to arsenate. Catalyzes the reduction of arsenate [As(V)] to arsenite [As(III)]. This Escherichia coli protein is Arsenate reductase.